The following is a 1066-amino-acid chain: Glucose transport transcription regulator RGT1 (1066 aa).

2 stretches are compositionally biased toward polar residues: residues 1–11 (MTPMSENNGSE) and 42–57 (VESQ…NTSA). Disordered stretches follow at residues 1-70 (MTPM…ACDQ), 108-153 (PSKG…VLLP), 214-285 (YASP…QQQY), 298-399 (GANG…EYPL), 616-645 (DATK…NDSR), and 849-871 (MEHD…ESGK). Residues 68-97 (CDQCRKRKIRCDYDDDKGVCTSCRKNGESC) constitute a DNA-binding region (zn(2)-C6 fungal-type). Composition is skewed to polar residues over residues 118-131 (VSRS…NTAA), 139-148 (EFSSPSSRQG), 260-270 (GSNPPSLKNVS), and 314-327 (MSPS…SVPM). 2 stretches are compositionally biased toward low complexity: residues 328–350 (NQSN…KVQP) and 622–641 (SNDN…NNDN). A compositionally biased stretch (polar residues) spans 855 to 871 (GNSASRKFTTSQAESGK).

The protein belongs to the EDS1/RGT1 family.

The protein resides in the nucleus. It localises to the cytoplasm. In terms of biological role, glucose-responsive transcription factor that regulates expression of several glucose transporter (HXT) genes in response to glucose. In the absence of glucose, it functions as a transcriptional repressor, whereas high concentrations of glucose cause it to function as a transcriptional activator. In cells growing on low levels of glucose, has a neutral role, neither repressing nor activating transcription. The sequence is that of Glucose transport transcription regulator RGT1 (RGT1) from Zygosaccharomyces rouxii (strain ATCC 2623 / CBS 732 / NBRC 1130 / NCYC 568 / NRRL Y-229).